The primary structure comprises 102 residues: Large ribosomal subunit protein bL21 (102 aa).

The protein belongs to the bacterial ribosomal protein bL21 family. As to quaternary structure, part of the 50S ribosomal subunit. Contacts protein L20.

This protein binds to 23S rRNA in the presence of protein L20. This chain is Large ribosomal subunit protein bL21, found in Onion yellows phytoplasma (strain OY-M).